The primary structure comprises 46 residues: Short transmembrane mitochondrial protein 1 (46 aa).

The helical transmembrane segment at 7–23 threads the bilayer; sequence GFTLGNVVGMYLAQNYE.

The protein belongs to the STMP1 family. As to expression, widely expressed. Expressed more abundantly in brain compared with other tissues such as heart, muscle and liver.

It localises to the mitochondrion inner membrane. The protein localises to the mitochondrion outer membrane. The protein resides in the mitochondrion intermembrane space. Microprotein involved in mitochondrial respiratory chain complex III (ubiquinol-cytochrome c oxidoreductase) and complex IV (mitochondrial cytochrome c oxidase complex) assembly. Required for the formation of mitochondrial supercomplexes (SCs). Also required for the activation of the NLRP3 inflammasome. The protein is Short transmembrane mitochondrial protein 1 of Danio rerio (Zebrafish).